Consider the following 142-residue polypeptide: Baculoviral IAP repeat-containing protein 5 (142 aa).

One copy of the BIR repeat lies at 18 to 88 (RIYTFKNWPF…KHSPGCAFLT (71 aa)). Position 23 is an N6-acetyllysine (K23). T34 is subject to Phosphothreonine; by CDK1 and CDK15. The residue at position 48 (T48) is a Phosphothreonine. Positions 57, 60, 77, and 84 each coordinate Zn(2+). N6-acetyllysine is present on residues K90, K110, K112, and K115. T117 carries the post-translational modification Phosphothreonine; by AURKB.

The protein belongs to the IAP family. As to quaternary structure, monomer or homodimer. Exists as a homodimer in the apo state and as a monomer in the CPC-bound state. The monomer protects cells against apoptosis more efficiently than the dimer. Only the dimeric form is capable of enhancing tubulin stability in cells. When phosphorylated, interacts with LAMTOR5/HBXIP; the resulting complex binds pro-CASP9, as well as active CASP9, but much less efficiently. Component of the chromosomal passenger complex (CPC) composed of at least BIRC5/survivin, CDCA8/borealin, INCENP, AURKB or AURKC; in the complex forms a triple-helix bundle-based subcomplex with INCENP and CDCA8. Interacts with JTB. Interacts (via BIR domain) with histone H3 phosphorylated at 'Thr-3' (H3pT3). Interacts with EVI5. Interacts with GTP-bound RAN in both the S and M phases of the cell cycle. Interacts with USP9X. Interacts with tubulin. Interacts with BIRC2/c-IAP1. The monomeric form interacts with XIAP/BIRC4. Both the dimeric and monomeric form can interact with DIABLO/SMAC. Interacts with BIRC6/bruce. Interacts with FBXL7; this interaction facilitates the polyubiquitination and subsequent proteasomal degradation of BIRC5 by the SCF(FBXL7) E3 ubiquitin-protein ligase complex. In terms of processing, ubiquitinated by the Cul9-RING ubiquitin-protein ligase complex, leading to its degradation. Ubiquitination is required for centrosomal targeting. Deubiquitinated by USP35 or USP38; leading to stabilization. Post-translationally, in vitro phosphorylation at Thr-117 by AURKB prevents interaction with INCENP and localization to mitotic chromosomes. Phosphorylation at Thr-48 by CK2 is critical for its mitotic and anti-apoptotic activities. Phosphorylation at Thr-34 by CDK15 is critical for its anti-apoptotic activity.

The protein resides in the cytoplasm. The protein localises to the nucleus. It is found in the chromosome. It localises to the centromere. Its subcellular location is the cytoskeleton. The protein resides in the spindle. The protein localises to the kinetochore. It is found in the midbody. Multitasking protein that has dual roles in promoting cell proliferation and preventing apoptosis. Component of a chromosome passage protein complex (CPC) which is essential for chromosome alignment and segregation during mitosis and cytokinesis. Acts as an important regulator of the localization of this complex; directs CPC movement to different locations from the inner centromere during prometaphase to midbody during cytokinesis and participates in the organization of the center spindle by associating with polymerized microtubules. Involved in the recruitment of CPC to centromeres during early mitosis via association with histone H3 phosphorylated at 'Thr-3' (H3pT3) during mitosis. The complex with RAN plays a role in mitotic spindle formation by serving as a physical scaffold to help deliver the RAN effector molecule TPX2 to microtubules. May counteract a default induction of apoptosis in G2/M phase. The acetylated form represses STAT3 transactivation of target gene promoters. May play a role in neoplasia. Inhibitor of CASP3 and CASP7. Essential for the maintenance of mitochondrial integrity and function. This is Baculoviral IAP repeat-containing protein 5 (Birc5) from Rattus norvegicus (Rat).